We begin with the raw amino-acid sequence, 685 residues long: Putative alpha-1,3-mannosyltransferase MNN14 (685 aa).

Over 1–13 (MGLLSIPYQSKSK) the chain is Cytoplasmic. Residues 14 to 34 (LWIAIFLVVWSLISMHFIWQS) traverse the membrane as a helical segment. The Lumenal segment spans residues 35 to 685 (QANSGLILKN…EIWMRGYNYL (651 aa)). N-linked (GlcNAc...) asparagine glycans are attached at residues Asn-199, Asn-338, Asn-408, and Asn-556.

It belongs to the MNN1/MNT family.

It localises to the golgi apparatus membrane. It participates in protein modification; protein glycosylation. Its function is as follows. Responsible for addition of the terminal mannose residues to the outer chain of core N-linked polysaccharides and to O-linked mannotriose. Implicated in late Golgi modifications. Involved in virulence. The protein is Putative alpha-1,3-mannosyltransferase MNN14 (MNN14) of Candida albicans (strain SC5314 / ATCC MYA-2876) (Yeast).